We begin with the raw amino-acid sequence, 238 residues long: 2-C-methyl-D-erythritol 4-phosphate cytidylyltransferase (238 aa).

It belongs to the IspD/TarI cytidylyltransferase family. IspD subfamily.

It catalyses the reaction 2-C-methyl-D-erythritol 4-phosphate + CTP + H(+) = 4-CDP-2-C-methyl-D-erythritol + diphosphate. It functions in the pathway isoprenoid biosynthesis; isopentenyl diphosphate biosynthesis via DXP pathway; isopentenyl diphosphate from 1-deoxy-D-xylulose 5-phosphate: step 2/6. Catalyzes the formation of 4-diphosphocytidyl-2-C-methyl-D-erythritol from CTP and 2-C-methyl-D-erythritol 4-phosphate (MEP). This Acinetobacter baumannii (strain AYE) protein is 2-C-methyl-D-erythritol 4-phosphate cytidylyltransferase.